A 208-amino-acid polypeptide reads, in one-letter code: Small ribosomal subunit protein uS4 (208 aa).

The S4 RNA-binding domain maps to 98-160 (RRLDNVVYRL…SKSKTRFVEI (63 aa)).

This sequence belongs to the universal ribosomal protein uS4 family. Part of the 30S ribosomal subunit. Contacts protein S5. The interaction surface between S4 and S5 is involved in control of translational fidelity.

In terms of biological role, one of the primary rRNA binding proteins, it binds directly to 16S rRNA where it nucleates assembly of the body of the 30S subunit. Its function is as follows. With S5 and S12 plays an important role in translational accuracy. The sequence is that of Small ribosomal subunit protein uS4 from Caldicellulosiruptor bescii (strain ATCC BAA-1888 / DSM 6725 / KCTC 15123 / Z-1320) (Anaerocellum thermophilum).